The following is a 130-amino-acid chain: Small ribosomal subunit protein uS8 (130 aa).

It belongs to the universal ribosomal protein uS8 family. In terms of assembly, part of the 30S ribosomal subunit. Contacts proteins S5 and S12.

Its function is as follows. One of the primary rRNA binding proteins, it binds directly to 16S rRNA central domain where it helps coordinate assembly of the platform of the 30S subunit. This chain is Small ribosomal subunit protein uS8, found in Pseudomonas syringae pv. tomato (strain ATCC BAA-871 / DC3000).